A 438-amino-acid chain; its full sequence is Aspartate--tRNA(Asp/Asn) ligase (438 aa).

Glutamate 176 lines the L-aspartate pocket. An aspartate region spans residues 198 to 201 (QLYK). Arginine 220 is an L-aspartate binding site. Residues 220–222 (RAE), 228–230 (RHL), and glutamate 361 each bind ATP. Residues glutamate 361 and serine 364 each contribute to the Mg(2+) site. Residues serine 364 and arginine 368 each coordinate L-aspartate. 409 to 412 (GADR) contacts ATP.

It belongs to the class-II aminoacyl-tRNA synthetase family. Type 2 subfamily. In terms of assembly, homodimer. Mg(2+) serves as cofactor.

It localises to the cytoplasm. It catalyses the reaction tRNA(Asx) + L-aspartate + ATP = L-aspartyl-tRNA(Asx) + AMP + diphosphate. Functionally, aspartyl-tRNA synthetase with relaxed tRNA specificity since it is able to aspartylate not only its cognate tRNA(Asp) but also tRNA(Asn). Reaction proceeds in two steps: L-aspartate is first activated by ATP to form Asp-AMP and then transferred to the acceptor end of tRNA(Asp/Asn). The polypeptide is Aspartate--tRNA(Asp/Asn) ligase (Methanococcus maripaludis (strain C7 / ATCC BAA-1331)).